The chain runs to 362 residues: Aminomethyltransferase (362 aa).

The protein belongs to the GcvT family. The glycine cleavage system is composed of four proteins: P, T, L and H.

It catalyses the reaction N(6)-[(R)-S(8)-aminomethyldihydrolipoyl]-L-lysyl-[protein] + (6S)-5,6,7,8-tetrahydrofolate = N(6)-[(R)-dihydrolipoyl]-L-lysyl-[protein] + (6R)-5,10-methylene-5,6,7,8-tetrahydrofolate + NH4(+). The glycine cleavage system catalyzes the degradation of glycine. The sequence is that of Aminomethyltransferase from Listeria innocua serovar 6a (strain ATCC BAA-680 / CLIP 11262).